A 547-amino-acid chain; its full sequence is Zinc metalloproteinase-disintegrin-like BjussuMP-1 (547 aa).

Positions 1-133 (EFKVNGEPVV…KKASKLVVTA (133 aa)) are excised as a propeptide. In terms of domain architecture, Peptidase M12B spans 141–337 (RYVEIVVVVD…HNPQCILNEP (197 aa)). Ca(2+) is bound by residues E144 and D228. Disulfide bonds link C252-C332, C292-C316, and C294-C299. H277 serves as a coordination point for Zn(2+). E278 is an active-site residue. Zn(2+)-binding residues include H281 and H287. Residues C332, N335, V341, N344, L346, E348, E351, and D354 each coordinate Ca(2+). A Disintegrin domain is found at 339-421 (LTVSGNELLE…DCPRNRFHRN (83 aa)). Disulfide bonds link C353–C363, C362–C385, C376–C382, C381–C406, C394–C413, C425–C437, C444–C494, C459–C501, C472–C482, C489–C526, and C520–C531. Residue N451 is glycosylated (N-linked (GlcNAc...) asparagine). N-linked (GlcNAc...) asparagine glycosylation occurs at N504.

The protein belongs to the venom metalloproteinase (M12B) family. P-III subfamily. P-IIIa sub-subfamily. In terms of assembly, monomer. It depends on Zn(2+) as a cofactor. As to expression, expressed by the venom gland.

The protein localises to the secreted. With respect to regulation, completely inhibited by EDTA, EGTA, 1,10-phenanthroline, and partially by beta-mercaptoethanol. Is not inhibited by aprotinin and leupeptin. This protein is a zinc metalloprotease from snake venom that causes hemorrhage in mice after intradermal injection. It inhibits platelet aggregation induced by collagen and ADP. Has moderate edema activity, but no myotoxic activity. It hydrolyzes the Aalpha-chain and more slowly the Bbeta-chain of fibrinogen, without affecting the gamma-chains. It also shows proteolytic activity on casein. It is unable to clot plasma. It also shows bactericidal activity against E.coli and S.aureus. This Bothrops jararacussu (Jararacussu) protein is Zinc metalloproteinase-disintegrin-like BjussuMP-1.